The chain runs to 339 residues: GTP 3',8-cyclase (339 aa).

The Radical SAM core domain maps to 13–249; sequence RYGRPLRDLR…GEVAQRHAFA (237 aa). Arg-22 is a GTP binding site. [4Fe-4S] cluster is bound by residues Cys-29 and Cys-33. Tyr-35 contributes to the S-adenosyl-L-methionine binding site. A [4Fe-4S] cluster-binding site is contributed by Cys-36. Arg-75 is a GTP binding site. Gly-79 contacts S-adenosyl-L-methionine. Thr-106 contacts GTP. Ser-130 contacts S-adenosyl-L-methionine. Residue Lys-168 coordinates GTP. S-adenosyl-L-methionine is bound at residue Met-202. Cys-266 and Cys-269 together coordinate [4Fe-4S] cluster. 271 to 273 is a binding site for GTP; sequence RAR. A [4Fe-4S] cluster-binding site is contributed by Cys-283.

The protein belongs to the radical SAM superfamily. MoaA family. In terms of assembly, monomer and homodimer. [4Fe-4S] cluster is required as a cofactor.

The enzyme catalyses GTP + AH2 + S-adenosyl-L-methionine = (8S)-3',8-cyclo-7,8-dihydroguanosine 5'-triphosphate + 5'-deoxyadenosine + L-methionine + A + H(+). It functions in the pathway cofactor biosynthesis; molybdopterin biosynthesis. Catalyzes the cyclization of GTP to (8S)-3',8-cyclo-7,8-dihydroguanosine 5'-triphosphate. The sequence is that of GTP 3',8-cyclase from Xanthomonas campestris pv. campestris (strain B100).